The following is an 801-amino-acid chain: Ribosome biogenesis protein ERB1 (801 aa).

Disordered regions lie at residues 1–135 and 358–377; these read MGSK…LEDR and PEYL…DPED. Residues 35 to 90 are compositionally biased toward acidic residues; that stretch reads SEDEEDYIPSSEVDEDDDDDADESASEDSDDSNDSEDDEVEEDDEALLSDEIPSEG. 3 stretches are compositionally biased toward basic and acidic residues: residues 91–113, 124–135, and 362–377; these read ESEK…KEPS, PPRKEDEELEDR, and PTKE…DPED. WD repeat units lie at residues 451 to 490 and 494 to 534; these read GHEG…QVWS and NGDE…VTPA. The segment at 546–570 is disordered; sequence GFGHATNGKQQANLPPGKEPPGKWA. WD repeat units lie at residues 586-628, 631-669, 672-711, 715-755, and 771-801; these read TVRS…TQIP, KLNG…LVKI, PGAK…RPYK, FHTE…DQLE, and VNKL…RLWM.

The protein belongs to the WD repeat BOP1/ERB1 family. As to quaternary structure, component of the NOP7 complex, composed of ERB1, NOP7 and YTM1. The complex is held together by ERB1, which interacts with NOP7 via its N-terminal domain and with YTM1 via a high-affinity interaction between the seven-bladed beta-propeller domains of the 2 proteins. The NOP7 complex associates with the 66S pre-ribosome.

Its subcellular location is the nucleus. It is found in the nucleolus. The protein resides in the nucleoplasm. In terms of biological role, component of the NOP7 complex, which is required for maturation of the 25S and 5.8S ribosomal RNAs and formation of the 60S ribosome. The polypeptide is Ribosome biogenesis protein ERB1 (Chaetomium thermophilum (strain DSM 1495 / CBS 144.50 / IMI 039719) (Thermochaetoides thermophila)).